Consider the following 188-residue polypeptide: Molybdopterin synthase catalytic subunit (188 aa).

Polar residues predominate over residues 1-10; that stretch reads MSTSETSSYT. A disordered region spans residues 1–21; that stretch reads MSTSETSSYTPDIPSEPVTKT. Residues 123–124, K139, and 146–148 each bind substrate; these read HR and KLE.

The protein belongs to the MoaE family. MOCS2B subfamily. As to quaternary structure, heterotetramer; composed of 2 small (MOCS2A) and 2 large (MOCS2B) subunits.

Its subcellular location is the cytoplasm. It carries out the reaction 2 [molybdopterin-synthase sulfur-carrier protein]-C-terminal-Gly-aminoethanethioate + cyclic pyranopterin phosphate + H2O = molybdopterin + 2 [molybdopterin-synthase sulfur-carrier protein]-C-terminal Gly-Gly + 2 H(+). It functions in the pathway cofactor biosynthesis; molybdopterin biosynthesis. Catalytic subunit of the molybdopterin synthase complex, a complex that catalyzes the conversion of precursor Z into molybdopterin. Acts by mediating the incorporation of 2 sulfur atoms from thiocarboxylated MOCS2A into precursor Z to generate a dithiolene group. The polypeptide is Molybdopterin synthase catalytic subunit (Phaeosphaeria nodorum (strain SN15 / ATCC MYA-4574 / FGSC 10173) (Glume blotch fungus)).